Consider the following 674-residue polypeptide: Fidgetin-like protein 1 (674 aa).

A disordered region spans residues 157-179 (SQESDSLPNSAHDRDRTQDFPES). Basic and acidic residues predominate over residues 167 to 179 (AHDRDRTQDFPES). A Glycyl lysine isopeptide (Lys-Gly) (interchain with G-Cter in SUMO2) cross-link involves residue Lys-225. A Phosphoserine modification is found at Ser-259. The tract at residues 295 to 344 (FKTAKEQLWVDQQKKYHQPQRASGSSYGGVKKSLGASRSRGILGKFVPPI) is necessary and sufficient for interaction with RAD51. Lys-339 carries the N6-acetyllysine modification. ATP-binding positions include Ala-404 and 444–449 (GTGKTL).

The protein belongs to the AAA ATPase family. In terms of assembly, hexamer. Interacts (via N-terminal one-half region) with RAD51; the interaction is direct. Interacts (via N-terminal one-half region) with SPIDR (via the C-terminal region); the interaction is direct. Interacts with FIRRM; may regulate homologous recombination. Mg(2+) is required as a cofactor.

It localises to the nucleus. It is found in the cytoplasm. The protein localises to the perinuclear region. The catalysed reaction is ATP + H2O = ADP + phosphate + H(+). Functionally, involved in DNA double-strand break (DBS) repair via homologous recombination (HR). Recruited at DSB sites independently of BRCA2, RAD51 and RAD51 paralogs in a H2AX-dependent manner. May regulate osteoblast proliferation and differentiation. May play a role in the control of male meiosis dynamic. The polypeptide is Fidgetin-like protein 1 (FIGNL1) (Homo sapiens (Human)).